Here is a 399-residue protein sequence, read N- to C-terminus: S-adenosylmethionine synthase (399 aa).

Residue H17 coordinates ATP. D19 is a binding site for Mg(2+). Residue E45 participates in K(+) binding. L-methionine contacts are provided by E58 and Q101. The segment at 101–111 is flexible loop; it reads QSPDIAQGVDE. ATP contacts are provided by residues 177–179, 244–245, D253, 259–260, A276, and K280; these read DAK, RF, and RK. Residue D253 participates in L-methionine binding. Residue K284 coordinates L-methionine.

It belongs to the AdoMet synthase family. In terms of assembly, homotetramer; dimer of dimers. It depends on Mg(2+) as a cofactor. K(+) is required as a cofactor.

It is found in the cytoplasm. The enzyme catalyses L-methionine + ATP + H2O = S-adenosyl-L-methionine + phosphate + diphosphate. Its pathway is amino-acid biosynthesis; S-adenosyl-L-methionine biosynthesis; S-adenosyl-L-methionine from L-methionine: step 1/1. Its function is as follows. Catalyzes the formation of S-adenosylmethionine (AdoMet) from methionine and ATP. The overall synthetic reaction is composed of two sequential steps, AdoMet formation and the subsequent tripolyphosphate hydrolysis which occurs prior to release of AdoMet from the enzyme. In Listeria innocua serovar 6a (strain ATCC BAA-680 / CLIP 11262), this protein is S-adenosylmethionine synthase.